Here is a 198-residue protein sequence, read N- to C-terminus: 7-methyl-GTP pyrophosphatase (198 aa).

The active-site Proton acceptor is the D72.

This sequence belongs to the Maf family. YceF subfamily. A divalent metal cation serves as cofactor.

The protein localises to the cytoplasm. The catalysed reaction is N(7)-methyl-GTP + H2O = N(7)-methyl-GMP + diphosphate + H(+). Its function is as follows. Nucleoside triphosphate pyrophosphatase that hydrolyzes 7-methyl-GTP (m(7)GTP). May have a dual role in cell division arrest and in preventing the incorporation of modified nucleotides into cellular nucleic acids. The chain is 7-methyl-GTP pyrophosphatase from Idiomarina loihiensis (strain ATCC BAA-735 / DSM 15497 / L2-TR).